Reading from the N-terminus, the 499-residue chain is NADH-quinone oxidoreductase subunit N (499 aa).

14 helical membrane passes run 16–36, 42–62, 77–97, 109–129, 133–153, 167–187, 208–228, 252–272, 274–294, 302–322, 327–347, 376–396, 411–433, and 463–483; these read AAFSMSVVGGVGLAMIVLDAF, AIPWLGVAALGVSAVWEITHL, GGFVAFINLIILLTGLATILL, YGEVYALIMFCTVGMIMLGSA, VSIFLGLETMSVCLYVLTGFI, FLLGAFSTGFFLYGIALMYGA, LLFWGGFALFLVGFFFKVSAA, ATKAAAFAALILVLVHAVPGG, WQLSVAAVAVLTMVIGNVMAL, LLAYSSIAHAGYLLVGLSAGT, AGALFYLLVYAVMNIGAFGVM, GSTMGVFMLSLIGFPPLGGFI, TWLVVIGVLMSALSAYYYLRVVY, and GTLVVCAVALVVLGVFFGGVL.

The protein belongs to the complex I subunit 2 family. As to quaternary structure, NDH-1 is composed of 14 different subunits. Subunits NuoA, H, J, K, L, M, N constitute the membrane sector of the complex.

The protein resides in the cell inner membrane. The catalysed reaction is a quinone + NADH + 5 H(+)(in) = a quinol + NAD(+) + 4 H(+)(out). Functionally, NDH-1 shuttles electrons from NADH, via FMN and iron-sulfur (Fe-S) centers, to quinones in the respiratory chain. The immediate electron acceptor for the enzyme in this species is believed to be a menaquinone. Couples the redox reaction to proton translocation (for every two electrons transferred, four hydrogen ions are translocated across the cytoplasmic membrane), and thus conserves the redox energy in a proton gradient. The polypeptide is NADH-quinone oxidoreductase subunit N (Salinibacter ruber (strain DSM 13855 / M31)).